Here is a 622-residue protein sequence, read N- to C-terminus: ATP-dependent lipid A-core flippase (622 aa).

Transmembrane regions (helical) follow at residues 32–52 (IVAALIAIFGVAATESYLAAF), 91–111 (VWGTENKIWTVPLFLIILVVI), 192–212 (IVLLYLNWQLSLIVVLMFPLL), 286–306 (SPFSELIASIALAVVIFIALW), and 312–332 (YTTIGEFMAFIVAMLQMYAPI). One can recognise an ABC transmembrane type-1 domain in the interval 33-344 (VAALIAIFGV…LANISIPMQT (312 aa)). Residues 378 to 611 (FRNVDVEYRS…NGYYTMLRNI (234 aa)) enclose the ABC transporter domain. Residue 410–417 (GRSGSGKS) participates in ATP binding.

The protein belongs to the ABC transporter superfamily. Lipid exporter (TC 3.A.1.106) family. As to quaternary structure, homodimer.

The protein resides in the cell inner membrane. It carries out the reaction ATP + H2O + lipid A-core oligosaccharideSide 1 = ADP + phosphate + lipid A-core oligosaccharideSide 2.. In terms of biological role, involved in lipopolysaccharide (LPS) biosynthesis. Translocates lipid A-core from the inner to the outer leaflet of the inner membrane. Transmembrane domains (TMD) form a pore in the inner membrane and the ATP-binding domain (NBD) is responsible for energy generation. This chain is ATP-dependent lipid A-core flippase, found in Neisseria gonorrhoeae (strain ATCC 700825 / FA 1090).